The sequence spans 206 residues: Protein MIS12 homolog (206 aa).

A coiled-coil region spans residues 102–206; the sequence is DKCQETNPFS…EKESRRLETQ (105 aa).

Belongs to the mis12 family. In terms of assembly, component of the MIS12 complex composed of MIS12, DSN1, NSL1 and PMF1. Also interacts with KNL1, CBX3, CBX5, NDC80 and ZWINT.

The protein localises to the chromosome. It localises to the centromere. The protein resides in the kinetochore. Functionally, part of the MIS12 complex which is required for normal chromosome alignment and segregation and for kinetochore formation during mitosis. Essential for proper kinetochore microtubule attachments. The polypeptide is Protein MIS12 homolog (Mus musculus (Mouse)).